The sequence spans 151 residues: Tetratricopeptide repeat protein 32 (151 aa).

3 TPR repeats span residues 8 to 41, 58 to 91, and 92 to 125; these read SHAT…CACA, ATAY…QPNF, and EVPY…NPGF.

This is Tetratricopeptide repeat protein 32 (TTC32) from Homo sapiens (Human).